We begin with the raw amino-acid sequence, 398 residues long: UPF0496 protein At5g66660 (398 aa).

Helical transmembrane passes span 240-260 (VFFATAYVSVLVLSVVATTMS) and 263-283 (PVVCAVASGSTAPIEITGKWF).

The protein belongs to the UPF0496 family.

The protein localises to the membrane. In Arabidopsis thaliana (Mouse-ear cress), this protein is UPF0496 protein At5g66660.